Reading from the N-terminus, the 252-residue chain is uncharacterized protein (252 aa).

An N-terminal signal peptide occupies residues 1–22 (MIHSKRLRLWLYLVLLAVFISA). Residue Cys23 is the site of N-palmitoyl cysteine attachment. The S-diacylglycerol cysteine moiety is linked to residue Cys23.

It belongs to the staphylococcal tandem lipoprotein family.

The protein resides in the cell membrane. This is an uncharacterized protein from Staphylococcus aureus (strain MW2).